We begin with the raw amino-acid sequence, 415 residues long: Light-independent protochlorophyllide reductase subunit N (415 aa).

Residues cysteine 16, cysteine 41, and cysteine 98 each coordinate [4Fe-4S] cluster.

This sequence belongs to the BchN/ChlN family. As to quaternary structure, protochlorophyllide reductase is composed of three subunits; BchL, BchN and BchB. Forms a heterotetramer of two BchB and two BchN subunits. [4Fe-4S] cluster is required as a cofactor.

It catalyses the reaction chlorophyllide a + oxidized 2[4Fe-4S]-[ferredoxin] + 2 ADP + 2 phosphate = protochlorophyllide a + reduced 2[4Fe-4S]-[ferredoxin] + 2 ATP + 2 H2O. The protein operates within porphyrin-containing compound metabolism; bacteriochlorophyll biosynthesis (light-independent). In terms of biological role, component of the dark-operative protochlorophyllide reductase (DPOR) that uses Mg-ATP and reduced ferredoxin to reduce ring D of protochlorophyllide (Pchlide) to form chlorophyllide a (Chlide). This reaction is light-independent. The NB-protein (BchN-BchB) is the catalytic component of the complex. The polypeptide is Light-independent protochlorophyllide reductase subunit N (Roseiflexus sp. (strain RS-1)).